A 214-amino-acid chain; its full sequence is Large ribosomal subunit protein bL25 (214 aa).

The interval 194-214 is disordered; it reads TTEAEETAEPEVIRRKEEEEE. Residues 204–214 are compositionally biased toward basic and acidic residues; sequence EVIRRKEEEEE.

Belongs to the bacterial ribosomal protein bL25 family. CTC subfamily. Part of the 50S ribosomal subunit; part of the 5S rRNA/L5/L18/L25 subcomplex. Contacts the 5S rRNA. Binds to the 5S rRNA independently of L5 and L18.

This is one of the proteins that binds to the 5S RNA in the ribosome where it forms part of the central protuberance. The polypeptide is Large ribosomal subunit protein bL25 (Thermotoga petrophila (strain ATCC BAA-488 / DSM 13995 / JCM 10881 / RKU-1)).